Reading from the N-terminus, the 254-residue chain is UPF0246 protein CPF_2407 (254 aa).

The protein belongs to the UPF0246 family.

The polypeptide is UPF0246 protein CPF_2407 (Clostridium perfringens (strain ATCC 13124 / DSM 756 / JCM 1290 / NCIMB 6125 / NCTC 8237 / Type A)).